We begin with the raw amino-acid sequence, 143 residues long: Transcriptional regulator MraZ (143 aa).

2 SpoVT-AbrB domains span residues 5–47 and 76–119; these read EYHH…SMEE and AMES…AKER.

The protein belongs to the MraZ family. Forms oligomers.

Its subcellular location is the cytoplasm. It is found in the nucleoid. The protein is Transcriptional regulator MraZ of Lactobacillus helveticus (strain DPC 4571).